An 858-amino-acid polypeptide reads, in one-letter code: Leucine--tRNA ligase (858 aa).

A 'HIGH' region motif is present at residues 42-52 (PYPSGNLHMGH). The segment covering 584–594 (NPNRSDSSRYI) has biased composition (polar residues). A disordered region spans residues 584-611 (NPNRSDSSRYIPSNLVDPNDPKDPETGE). The short motif at 619–623 (TMSKS) is the 'KMSKS' region element. An ATP-binding site is contributed by K622.

This sequence belongs to the class-I aminoacyl-tRNA synthetase family.

It is found in the cytoplasm. It catalyses the reaction tRNA(Leu) + L-leucine + ATP = L-leucyl-tRNA(Leu) + AMP + diphosphate. The polypeptide is Leucine--tRNA ligase (Cyanothece sp. (strain PCC 7425 / ATCC 29141)).